Here is a 298-residue protein sequence, read N- to C-terminus: MSAQNPLFSGSIVALVTPMNHYGEVDFSCLEKLVEHHIEAGSNALVSVGTTGESATLSIEENVKVIEKTVEFAKGRIPIIAGAGANATSEAITMTKLLRDSGVAGCLSVVPYYNKPTQEGIYQHFKAIAECTNLPQILYNVPSRTGSDMKPETVARLAKIENIVGIKEATGDVSRIVKIKQLAGKNFIVLSGDDATGLEAIKLGAEGVISVTNNIAAKDMADMYRYALVGDFDKAEEINARLMRLHHDLFIESNPIPVKWAAYRLGLIKSSHLRLPLTTLSEEIQPKVEDALKIAGLL.

Position 51 (Thr-51) interacts with pyruvate. The active-site Proton donor/acceptor is Tyr-139. Lys-167 serves as the catalytic Schiff-base intermediate with substrate. Ile-209 serves as a coordination point for pyruvate.

The protein belongs to the DapA family. In terms of assembly, homotetramer; dimer of dimers.

Its subcellular location is the cytoplasm. It catalyses the reaction L-aspartate 4-semialdehyde + pyruvate = (2S,4S)-4-hydroxy-2,3,4,5-tetrahydrodipicolinate + H2O + H(+). Its pathway is amino-acid biosynthesis; L-lysine biosynthesis via DAP pathway; (S)-tetrahydrodipicolinate from L-aspartate: step 3/4. In terms of biological role, catalyzes the condensation of (S)-aspartate-beta-semialdehyde [(S)-ASA] and pyruvate to 4-hydroxy-tetrahydrodipicolinate (HTPA). This Haemophilus influenzae (strain PittEE) protein is 4-hydroxy-tetrahydrodipicolinate synthase.